The primary structure comprises 407 residues: Lysophospholipid transporter LplT (407 aa).

A run of 11 helical transmembrane segments spans residues 18-38 (AVII…FATL), 53-73 (FLQM…GQIA), 91-111 (AGAL…LVGV), 139-159 (LMEA…GVLA), 163-183 (IYGA…ANML), 229-249 (WGAG…ALGI), 257-277 (LLNA…AKLV), 286-306 (LPAG…HNLM), 310-330 (SLLI…NALL), 343-365 (AIAV…YSLV), and 375-395 (IGIG…VWLI).

The protein belongs to the major facilitator superfamily. LplT (TC 2.A.1.42) family.

The protein localises to the cell inner membrane. Functionally, catalyzes the facilitated diffusion of 2-acyl-glycero-3-phosphoethanolamine (2-acyl-GPE) into the cell. This chain is Lysophospholipid transporter LplT, found in Pectobacterium carotovorum subsp. carotovorum (strain PC1).